The primary structure comprises 349 residues: Phosphoribosylformylglycinamidine cyclo-ligase (349 aa).

Belongs to the AIR synthase family.

It is found in the cytoplasm. It catalyses the reaction 2-formamido-N(1)-(5-O-phospho-beta-D-ribosyl)acetamidine + ATP = 5-amino-1-(5-phospho-beta-D-ribosyl)imidazole + ADP + phosphate + H(+). It functions in the pathway purine metabolism; IMP biosynthesis via de novo pathway; 5-amino-1-(5-phospho-D-ribosyl)imidazole from N(2)-formyl-N(1)-(5-phospho-D-ribosyl)glycinamide: step 2/2. This is Phosphoribosylformylglycinamidine cyclo-ligase from Lactobacillus helveticus (strain DPC 4571).